We begin with the raw amino-acid sequence, 573 residues long: Diflavin flavoprotein A 1 (573 aa).

The tract at residues 43 to 236 is zinc metallo-hydrolase; the sequence is QNGTTYNSYL…GTISTVANGH (194 aa). Fe cation contacts are provided by histidine 92, glutamate 94, aspartate 96, histidine 159, aspartate 178, and histidine 236. A Flavodoxin-like domain is found at 265–401; that stretch reads VVVFYVADYG…LCDESGTDLG (137 aa). Residues 424–573 are flavodoxin-reductase-like; that stretch reads IGRISGGLYI…VHHRKVGNYY (150 aa).

In the N-terminal section; belongs to the zinc metallo-hydrolase group 3 family. This sequence in the C-terminal section; belongs to the flavodoxin reductase family. As to quaternary structure, homodimer. Fe cation serves as cofactor. It depends on FAD as a cofactor. Requires FMN as cofactor.

Its function is as follows. Mediates electron transfer from NADH to oxygen, reducing it to water. This modular protein has 3 redox cofactors, in other organisms the same activity requires 2 or 3 proteins. The sequence is that of Diflavin flavoprotein A 1 (dfa1) from Synechocystis sp. (strain ATCC 27184 / PCC 6803 / Kazusa).